We begin with the raw amino-acid sequence, 397 residues long: L-rhamnonate dehydratase (397 aa).

Substrate contacts are provided by H25 and R51. D217, E243, and E271 together coordinate Mg(2+). The Proton acceptor role is filled by H321. E341 provides a ligand contact to substrate.

The protein belongs to the mandelate racemase/muconate lactonizing enzyme family. RhamD subfamily. As to quaternary structure, homooctamer; tetramer of dimers. Requires Mg(2+) as cofactor.

The catalysed reaction is L-rhamnonate = 2-dehydro-3-deoxy-L-rhamnonate + H2O. Its pathway is carbohydrate degradation; L-rhamnose degradation. Its function is as follows. Catalyzes the dehydration of L-rhamnonate to 2-keto-3-deoxy-L-rhamnonate (KDR). Also shows activity with L-lyxonate and L-mannonate, with much lower catalytic efficiency. Catalyzes the third step in an alternative pathway for rhamnose utilization that does not involve phosphorylated intermediates. In Sphingomonas sp. (strain SKA58), this protein is L-rhamnonate dehydratase.